Reading from the N-terminus, the 306-residue chain is Curved DNA-binding protein (306 aa).

Residues 5 to 69 (DYYAIMGVKP…QRRAEYDQMW (65 aa)) form the J domain.

It is found in the cytoplasm. Its subcellular location is the nucleoid. Its function is as follows. DNA-binding protein that preferentially recognizes a curved DNA sequence. It is probably a functional analog of DnaJ; displays overlapping activities with DnaJ, but functions under different conditions, probably acting as a molecular chaperone in an adaptive response to environmental stresses other than heat shock. Lacks autonomous chaperone activity; binds native substrates and targets them for recognition by DnaK. Its activity is inhibited by the binding of CbpM. This chain is Curved DNA-binding protein, found in Shigella boydii serotype 18 (strain CDC 3083-94 / BS512).